The chain runs to 484 residues: MNFNSFRKEIYSGNASVKELVNEFFLKIDSLNPKINAYTCLTKKIANSQSENIDKLITNNQKLPSLAGIPIAIKDNICTKGVVTSCSSKMLKDFVSPYESSASGKLWSLGGICLGKTNLDEFAMGSSTETSVFGTTSNPWDVNRVPGGSSGGSAASVAAGLCLAAIGSDTGGSIRQPASFCGVVGLKPTYGRVSRWGLIAFASSLDQIGPITNTVSDAAEILYSISGKDNLDSTCLDKPVPNYLSDLDKSIKGIKIGIIEECFDHPGLDPEVKESVLSSVERFRSLGAEIHDIKCPRFNDGIATYYVIAPCEASANLARYDGVKYGYRSEGESNLLEMICKSRAEGFGDEVQRRILIGTYALSAGYSDAYYKKAQRVRTLIRSDFDNAFNEVDVLLTPTCPTTAFLKGDFVNDPLSMYLSDLLTVPVNLAGLPAISIPCGFDKKGLPIGLQLIGNVLEEHRILNVANIFEKDAEVMNTKPNIEI.

Catalysis depends on charge relay system residues K74 and S149. The Acyl-ester intermediate role is filled by S173.

It belongs to the amidase family. GatA subfamily. As to quaternary structure, heterotrimer of A, B and C subunits.

It carries out the reaction L-glutamyl-tRNA(Gln) + L-glutamine + ATP + H2O = L-glutaminyl-tRNA(Gln) + L-glutamate + ADP + phosphate + H(+). Its function is as follows. Allows the formation of correctly charged Gln-tRNA(Gln) through the transamidation of misacylated Glu-tRNA(Gln) in organisms which lack glutaminyl-tRNA synthetase. The reaction takes place in the presence of glutamine and ATP through an activated gamma-phospho-Glu-tRNA(Gln). The polypeptide is Glutamyl-tRNA(Gln) amidotransferase subunit A (Prochlorococcus marinus subsp. pastoris (strain CCMP1986 / NIES-2087 / MED4)).